The primary structure comprises 157 residues: Large ribosomal subunit protein bL17 (157 aa).

The tract at residues 124-157 (AAPVVSKQDRAKRVKGSKKAESRSQENEGGDAAE) is disordered.

The protein belongs to the bacterial ribosomal protein bL17 family. As to quaternary structure, part of the 50S ribosomal subunit. Contacts protein L32.

The sequence is that of Large ribosomal subunit protein bL17 from Chlorobaculum tepidum (strain ATCC 49652 / DSM 12025 / NBRC 103806 / TLS) (Chlorobium tepidum).